The chain runs to 224 residues: uncharacterized protein (224 aa).

The 60-residue stretch at 9–68 (SKMVDVNEITKYLPGFNCGACGYKRCDLFAEALLNKDVKLEDCPFLLRERFKENYEKLKE) folds into the 4Fe-4S domain. The [4Fe-4S] cluster site is built by Cys-26, Cys-29, Cys-34, and Cys-51.

Requires [4Fe-4S] cluster as cofactor.

This is an uncharacterized protein from Methanocaldococcus jannaschii (strain ATCC 43067 / DSM 2661 / JAL-1 / JCM 10045 / NBRC 100440) (Methanococcus jannaschii).